A 1006-amino-acid polypeptide reads, in one-letter code: Multiple C2 domain and transmembrane region protein 9 (1006 aa).

A C2 1 domain is found at 1–108 (MSNIKLGVEV…PRSEAAPFNY (108 aa)). The segment at 135–156 (VTPSVPTPVPESPQAYSPSPRK) is disordered. 3 consecutive C2 domains span residues 251–371 (RGTE…PQWY), 411–536 (SDSS…DRWV), and 579–704 (NSSD…THAY). Residues D284, D290, D337, D339, and D344 each coordinate Ca(2+). A run of 2 helical transmembrane segments spans residues 842-862 (MLVT…AVIG) and 946-966 (ATAI…ITPF).

It belongs to the MCTP family. The cofactor is Ca(2+). As to expression, expressed in incipient leaf primordia and roots meristems. Observed in flowers.

Its subcellular location is the cell membrane. The protein localises to the cytoplasm. In terms of biological role, may function as a signaling molecule by regulating the trafficking of other regulators. The protein is Multiple C2 domain and transmembrane region protein 9 of Arabidopsis thaliana (Mouse-ear cress).